We begin with the raw amino-acid sequence, 214 residues long: Alkaline phosphatase-like protein (214 aa).

The next 3 membrane-spanning stretches (helical) occupy residues 48-68 (LGII…ALIL), 141-161 (FLIL…CLGA), and 177-197 (YSSV…LIFV).

This sequence belongs to the DedA family.

Its subcellular location is the cell membrane. This Lactococcus lactis subsp. lactis (strain IL1403) (Streptococcus lactis) protein is Alkaline phosphatase-like protein (apl).